The following is a 200-amino-acid chain: Protein C2-DOMAIN ABA-RELATED 5 (200 aa).

Positions 22–142 constitute a C2 domain; sequence VAGEKHKDRR…LKMHLHDLPS (121 aa). Ca(2+)-binding residues include Arg57, Asp58, Asp63, Asp109, Tyr110, Asp111, and Asp117.

The protein belongs to the plant CAR protein family. As to quaternary structure, binds to PYR/PYL/RCAR abscisic acid intracellular receptors in an ABA-independent manner, both at the plasma membrane and in the nucleus.

It is found in the cell membrane. The protein resides in the nucleus. Functionally, stimulates the GTPase/ATPase activities of Obg-like ATPases. Mediates the transient calcium-dependent interaction of PYR/PYL/RCAR abscisic acid (ABA) receptors with the plasma membrane and thus regulates ABA sensitivity. The polypeptide is Protein C2-DOMAIN ABA-RELATED 5 (Arabidopsis thaliana (Mouse-ear cress)).